A 297-amino-acid chain; its full sequence is Nicotinate-nucleotide pyrophosphorylase [carboxylating] (297 aa).

Pro2 bears the Blocked amino end (Pro) mark. Residues Arg119, 152 to 154 (TRK), Arg176, Lys186, Glu215, Asp236, 259 to 261 (SGN), and 280 to 282 (VGA) contribute to the substrate site.

Belongs to the NadC/ModD family. Hexamer formed by 3 homodimers. Homodimer.

It catalyses the reaction nicotinate beta-D-ribonucleotide + CO2 + diphosphate = quinolinate + 5-phospho-alpha-D-ribose 1-diphosphate + 2 H(+). It participates in cofactor biosynthesis; NAD(+) biosynthesis; nicotinate D-ribonucleotide from quinolinate: step 1/1. Its function is as follows. Involved in the catabolism of quinolinic acid (QA). The chain is Nicotinate-nucleotide pyrophosphorylase [carboxylating] (nadC) from Salmonella typhimurium (strain LT2 / SGSC1412 / ATCC 700720).